Consider the following 52-residue polypeptide: Conotoxin Cal9.2d (52 aa).

Positions 1 to 6 are excised as a propeptide; that stretch reads KRGVTL. Cystine bridges form between Cys14-Cys31, Cys19-Cys41, and Cys21-Cys46.

In terms of tissue distribution, expressed by the venom duct.

The protein localises to the secreted. Its function is as follows. Probable neurotoxin with unknown target. Possibly targets ion channels. The sequence is that of Conotoxin Cal9.2d from Californiconus californicus (California cone).